Reading from the N-terminus, the 239-residue chain is Peptidyl-tRNA hydrolase (239 aa).

Tyr14 serves as a coordination point for tRNA. His19 acts as the Proton acceptor in catalysis. 3 residues coordinate tRNA: Phe64, Asn66, and Asn112. The segment at 186–239 is disordered; that stretch reads RTAPPRPSTGTGRPPAKTPARAEEPPAPAASPAPATAPLPDARSPLQKLVDRFK. The span at 193–204 shows a compositional bias: low complexity; sequence STGTGRPPAKTP. Pro residues predominate over residues 210-222; the sequence is PPAPAASPAPATA.

The protein belongs to the PTH family. As to quaternary structure, monomer.

The protein localises to the cytoplasm. The enzyme catalyses an N-acyl-L-alpha-aminoacyl-tRNA + H2O = an N-acyl-L-amino acid + a tRNA + H(+). Hydrolyzes ribosome-free peptidyl-tRNAs (with 1 or more amino acids incorporated), which drop off the ribosome during protein synthesis, or as a result of ribosome stalling. In terms of biological role, catalyzes the release of premature peptidyl moieties from peptidyl-tRNA molecules trapped in stalled 50S ribosomal subunits, and thus maintains levels of free tRNAs and 50S ribosomes. The protein is Peptidyl-tRNA hydrolase of Ruegeria pomeroyi (strain ATCC 700808 / DSM 15171 / DSS-3) (Silicibacter pomeroyi).